Here is a 466-residue protein sequence, read N- to C-terminus: Delta-1 crystallin (466 aa).

The protein belongs to the lyase 1 family. Argininosuccinate lyase subfamily. As to quaternary structure, homotetramer. In terms of tissue distribution, eye lens.

Its function is as follows. Delta crystallin, the principal crystallin in embryonic lens, is found only in birds and reptiles. The chain is Delta-1 crystallin (ASL1) from Meleagris gallopavo (Wild turkey).